Consider the following 257-residue polypeptide: L-aspartate dehydrogenase (257 aa).

NAD(+) is bound by residues alanine 124 and asparagine 180. The active site involves histidine 208.

Belongs to the L-aspartate dehydrogenase family.

It catalyses the reaction L-aspartate + NADP(+) + H2O = oxaloacetate + NH4(+) + NADPH + H(+). The catalysed reaction is L-aspartate + NAD(+) + H2O = oxaloacetate + NH4(+) + NADH + H(+). It participates in cofactor biosynthesis; NAD(+) biosynthesis; iminoaspartate from L-aspartate (dehydrogenase route): step 1/1. In terms of biological role, specifically catalyzes the NAD or NADP-dependent dehydrogenation of L-aspartate to iminoaspartate. The polypeptide is L-aspartate dehydrogenase (Methanothermobacter thermautotrophicus (strain ATCC 29096 / DSM 1053 / JCM 10044 / NBRC 100330 / Delta H) (Methanobacterium thermoautotrophicum)).